Reading from the N-terminus, the 142-residue chain is Putative tyrosine phosphatase 123R (142 aa).

In terms of domain architecture, Tyrosine-protein phosphatase spans 2–137 (EPTKIVENLY…LAQFERWLNS (136 aa)). Catalysis depends on Cys81, which acts as the Phosphocysteine intermediate.

The protein belongs to the protein-tyrosine phosphatase family.

This Invertebrate iridescent virus 6 (IIV-6) protein is Putative tyrosine phosphatase 123R.